Consider the following 197-residue polypeptide: 3-isopropylmalate dehydratase small subunit (197 aa).

This sequence belongs to the LeuD family. LeuD type 1 subfamily. Heterodimer of LeuC and LeuD.

It carries out the reaction (2R,3S)-3-isopropylmalate = (2S)-2-isopropylmalate. Its pathway is amino-acid biosynthesis; L-leucine biosynthesis; L-leucine from 3-methyl-2-oxobutanoate: step 2/4. In terms of biological role, catalyzes the isomerization between 2-isopropylmalate and 3-isopropylmalate, via the formation of 2-isopropylmaleate. The chain is 3-isopropylmalate dehydratase small subunit from Mycobacterium sp. (strain KMS).